The chain runs to 517 residues: Acetylcholine receptor subunit delta (517 aa).

Positions 1 to 21 (MEGPVLTLGLLAALAVCGSWG) are cleaved as a signal peptide. Topologically, residues 22-245 (LNEEERLIRH…ITFYLIIRRK (224 aa)) are extracellular. N-linked (GlcNAc...) asparagine glycans are attached at residues Asn-97 and Asn-164. Cys-151 and Cys-165 are oxidised to a cystine. 3 helical membrane passes run 246-270 (PLFY…VFYL), 278-299 (TSVA…SKRL), and 312-333 (FLLF…VLNI). The Cytoplasmic segment spans residues 334–471 (HFRTPSTHVL…WNRVARTVDR (138 aa)). Tyr-390 carries the phosphotyrosine; by Tyr-kinases modification. A helical transmembrane segment spans residues 472–490 (LCLFVVTPVMVVGTAWIFL).

Belongs to the ligand-gated ion channel (TC 1.A.9) family. Acetylcholine receptor (TC 1.A.9.1) subfamily. Delta/CHRND sub-subfamily. In terms of assembly, pentamer of two alpha chains, and one each of the beta, delta, and gamma (in immature muscle) or epsilon (in mature muscle) chains. The muscle heteropentamer composed of alpha-1, beta-1, delta, epsilon subunits interacts with the alpha-conotoxin ImII.

The protein localises to the postsynaptic cell membrane. The protein resides in the cell membrane. It carries out the reaction K(+)(in) = K(+)(out). It catalyses the reaction Na(+)(in) = Na(+)(out). Functionally, after binding acetylcholine, the AChR responds by an extensive change in conformation that affects all subunits and leads to opening of an ion-conducting channel across the plasma membrane. The protein is Acetylcholine receptor subunit delta of Homo sapiens (Human).